The following is a 170-amino-acid chain: Translationally-controlled tumor protein homolog (170 aa).

A TCTP domain is found at 1–170; that stretch reads MIIYKDLLSG…FKDGLEIEKC (170 aa).

Belongs to the TCTP family.

The protein resides in the cytoplasm. In terms of biological role, involved in calcium binding and microtubule stabilization. The chain is Translationally-controlled tumor protein homolog (tpt1) from Scophthalmus maximus (Turbot).